Reading from the N-terminus, the 398-residue chain is MSKTIAVNAGSSTVKFKLFDMPSEEVVAEGNIERIGMDMGHAKIKYGDGQVSEEEKPFPNHGTAVSYLLDQLINLGIVKEYHEITAVGHRIVAGGEFFKDSVVIDDDVMQKIDELAEYAPLHNPAELQGIKAFKRVLPDAFAVAVFDTSFHSNMPEMNALYSVPYEWYEKYGARKYGAHGTSHRYVASRAAEMLGKPLEDLKLITCHIGAGASITAIKNGKSFDTSMGFSPLAGVTMATRSGDVDPSLVAFVQSKLGISSEEMIELLNHKSGLLGLSELSADMRDVQAAAEHGNKQCELALEIYENRVLKYIGSYLAELGGADAIVFTAGVGENDKEFRQAIGDKLAYFGVKVDPEKNDVRGEERDVSADDAKIKVLLIPTNEELMIVHDIERLRKQA.

N8 lines the Mg(2+) pocket. K15 serves as a coordination point for ATP. R90 contacts substrate. The Proton donor/acceptor role is filled by D147. ATP contacts are provided by residues 207-211 (HIGAG), 282-284 (DMR), and 330-334 (GVGEN). Residue E383 participates in Mg(2+) binding.

The protein belongs to the acetokinase family. As to quaternary structure, homodimer. Mg(2+) is required as a cofactor. The cofactor is Mn(2+).

It localises to the cytoplasm. It catalyses the reaction acetate + ATP = acetyl phosphate + ADP. Its pathway is metabolic intermediate biosynthesis; acetyl-CoA biosynthesis; acetyl-CoA from acetate: step 1/2. Functionally, catalyzes the formation of acetyl phosphate from acetate and ATP. Can also catalyze the reverse reaction. This Limosilactobacillus fermentum (strain NBRC 3956 / LMG 18251) (Lactobacillus fermentum) protein is Acetate kinase.